A 305-amino-acid chain; its full sequence is Aquaporin NIP6-1 (305 aa).

The tract at residues 1-30 is disordered; the sequence is MDHEEIPSTPSTPATTPGTPGAPLFGGFEG. A compositionally biased stretch (low complexity) spans 7-23; it reads PSTPSTPATTPGTPGAP. The next 2 helical transmembrane spans lie at 82-102 and 111-131; these read LGAE…TAIV and TLIG…LSTG. Positions 139–141 match the NPA 1 motif; the sequence is NPA. 3 helical membrane passes run 159-179, 194-214, and 221-241; these read VYIG…KAVF, LSQA…VVTA, and AVGE…ILIA. An NPA 2 motif is present at residues 250 to 252; sequence NPV. Residues 267-287 form a helical membrane-spanning segment; the sequence is IWVYLTAPILGALIGAGTYTI. Phosphoserine is present on Ser-302.

This sequence belongs to the MIP/aquaporin (TC 1.A.8) family. NIP (TC 1.A.8.12) subfamily. In terms of tissue distribution, expressed in roots.

The protein resides in the membrane. Functionally, transports glycerol, urea and formamide, in Xenopus laevis oocytes. Very low water transport activity. In Arabidopsis thaliana (Mouse-ear cress), this protein is Aquaporin NIP6-1 (NIP6-1).